The primary structure comprises 463 residues: Cysteine--tRNA ligase (463 aa).

Residue C29 coordinates Zn(2+). The 'HIGH' region motif lies at 31–41 (PTVYDFAHIGN). Zn(2+) is bound by residues C227, H252, and E256. The 'KMSKS' region signature appears at 285-289 (KMSKS). K288 serves as a coordination point for ATP.

This sequence belongs to the class-I aminoacyl-tRNA synthetase family. Monomer. Zn(2+) serves as cofactor.

It localises to the cytoplasm. The enzyme catalyses tRNA(Cys) + L-cysteine + ATP = L-cysteinyl-tRNA(Cys) + AMP + diphosphate. The chain is Cysteine--tRNA ligase from Rhodopseudomonas palustris (strain BisA53).